Consider the following 638-residue polypeptide: MSLATRRFGAAAALLVAACVLCTAPAWAQNETTGTGMVKTKSAFRWIRPPPARPPPFRRPPPAQTPYVHKVEYTELQILCPQTIDSVTGYPMDDPRCNVPRATVAAGEEALTIRNEFELLNGDVLNVTLEEVDTPENPSRRRLLSIIREEQRTGRVLLATSAELPTPTFRLKSLKSILKGSQKEIYAGKPIDLRTIVYIMDFSSCKLSGWSAPATLTPEKVTSDMLRGASAPTNNLANYYGACSYEKTLFNPDNFLVLGPVPVPCIGGVTPPPRPPRPPRPPPRAGSTISSLSRRNDTYDDWWDLSKYCTASEQQAWERAAEAYAQAIVAQDPNSATGKKLQGILQWRERRRNIYILPPGVKCSWSGYADVTCTSATCSAYVRGYSDTNAMQVIMHEAMHNYGLEHAGRGTLEYGDATDVMGDFNKAGKGLLCPNAPNMYRIGWAKPINEPGVAPFQNATGAWGNLTAANFTTDPWIRGLVIPAQGTRDDNMIVVNVGAQSTRDGAMKATGAQAYYFSYRIKNTTAGGYDSGLTLDFHKKVLVHAYNGIQSERVFGFKSNLLDWGPNFQSRSNTWTSPFLAYNNGLGGGVRLVVQSTSDTQAVVDICRISENGKELSCDDGIDNDCDGLQDNEDPDCQ.

A signal peptide spans 1-28 (MSLATRRFGAAAALLVAACVLCTAPAWA). A propeptide spans 29–183 (QNETTGTGMV…LKSILKGSQK (155 aa)) (activation peptide). Asn-30 carries N-linked (GlcNAc...) asparagine glycosylation. A Cysteine switch motif is present at residues 95-102 (PRCNVPRA). Zn(2+) is bound at residue Cys-97. The N-linked (GlcNAc...) asparagine glycan is linked to Asn-126. The interval 269 to 292 (VTPPPRPPRPPRPPPRAGSTISSL) is disordered. Pro residues predominate over residues 270-284 (TPPPRPPRPPRPPPR). N-linked (GlcNAc...) asparagine glycosylation is present at Asn-296. A Zn(2+)-binding site is contributed by His-396. Residue Glu-397 is part of the active site. Residues His-400 and His-406 each coordinate Zn(2+). Asn-458, Asn-465, Asn-470, and Asn-523 each carry an N-linked (GlcNAc...) asparagine glycan.

It belongs to the peptidase M11 family. Zn(2+) is required as a cofactor. In terms of processing, present in 2 forms: an inactive V-form in vegetative cells and an active and soluble G-form. The V-form enzyme may be converted to the G-form enzyme during gametic differentiation under nitrogen-starved conditions.

It is found in the periplasm. It localises to the secreted. The protein localises to the cell wall. The catalysed reaction is Cleavage of the proline- and hydroxyproline-rich proteins of the Chlamydomonas cell wall. Also cleaves azocasein, gelatin and Leu-Trp-Met-|-Arg-Phe-Ala.. Its function is as follows. Mediates digestion of the cell walls of the 2 mating type gametes during mating as a necessary prelude to cell fusion. This enzyme acts specifically on the framework proteins (inner wall) of the cell wall, cleaving several model peptides at specific sites. This chain is Autolysin, found in Chlamydomonas reinhardtii (Chlamydomonas smithii).